The sequence spans 451 residues: UPF0210 protein CLL_A1718 (451 aa).

This sequence belongs to the UPF0210 family. As to quaternary structure, homodimer.

The protein is UPF0210 protein CLL_A1718 of Clostridium botulinum (strain Eklund 17B / Type B).